The sequence spans 2286 residues: MSLRSGGRRRADPGADGEASRDDGATSSVSALKRLERSQWTDKMDLRFGFERLKEPGEKTGWLINMHPTEILDEDKRLGSAVDYYFIQDDGSRFKVALPYKPYFYIATRKGCEREVSSFLSKKFQGKIAKVETVPKEDLDLPNHLVGLKRNYIRLSFHTVEDLVKVRKEISPAVKKNREQDHASDAYTALLSSVLQRGGVITDEEETSKKIADQLDNIVDMREYDVPYHIRLSIDLKIHVAHWYNVRYRGNAFPVEITRRDDLVERPDPVVLAFDIETTKLPLKFPDAETDQIMMISYMIDGQGYLITNREIVSEDIEDFEFTPKPEYEGPFCVFNEPDEAHLIQRWFEHVQETKPTIMVTYNGDFFDWPFVEARAAVHGLSMQQEIGFQKDSQGEYKAPQCIHMDCLRWVKRDSYLPVGSHNLKAAAKAKLGYDPVELDPEDMCRMATEQPQTLATYSVSDAVATYYLYMKYVHPFIFALCTIIPMEPDEVLRKGSGTLCEALLMVQAFHANIIFPNKQEQEFNKLTDDGHVLDSETYVGGHVEALESGVFRSDIPCRFRMNPAAFDFLLQRVEKTLRHALEEEEKVPVEQVTNFEEVCDEIKSKLASLKDVPSRIECPLIYHLDVGAMYPNIILTNRLQPSAMVDEATCAACDFNKPGANCQRKMAWQWRGEFMPASRSEYHRIQHQLESEKFPPLFPEGPARAFHELSREEQAKYEKRRLADYCRKAYKKIHITKVEERLTTICQRENSFYVDTVRAFRDRRYEFKGLHKVWKKKLSAAVEVGDAAEVKRCKNMEVLYDSLQLAHKCILNSFYGYVMRKGARWYSMEMAGIVCFTGANIITQARELIEQIGRPLELDTDGIWCVLPNSFPENFVFKTTNVKKPKVTISYPGAMLNIMVKEGFTNDQYQELAEPSSLTYVTRSENSIFFEVDGPYLAMILPASKEEGKKLKKRYAVFNEDGSLAELKGFEVKRRGELQLIKIFQSSVFEAFLKGSTLEEVYGSVAKVADYWLDVLYSKAANMPDSELFELISENRSMSRKLEDYGEQKSTSISTAKRLAEFLGDQMVKDAGLSCRYIISRKPEGSPVTERAIPLAIFQAEPTVRKHFLRKWLKSSSLQDFDIRAILDWDYYIERLGSAIQKIITIPAALQQVKNPVPRVKHPDWLHKKLLEKNDVYKQKKISELFTLEGRRQVTMAEASEDSPRPSAPDMEDFGLVKLPHPAAPVTVKRKRVLWESQEESQDLTPTVPWQEILGQPPALGTSQEEWLVWLRFHKKKWQLQARQRLARRKRQRLESAEGVLRPGAIRDGPATGLGSFLRRTARSILDLPWQIVQISETSQAGLFRLWALVGSDLHCIRLSIPRVFYVNQRVAKAEEGASYRKVNRVLPRSNMVYNLYEYSVPEDMYQEHINEINAELSAPDIEGVYETQVPLLFRALVHLGCVCVVNKQLVRHLSGWEAETFALEHLEMRSLAQFSYLEPGSIRHIYLYHHAQAHKALFGIFIPSQRRASVFVLDTVRSNQMPSLGALYSAEHGLLLEKVGPELLPPPKHTFEVRAETDLKTICRAIQRFLLAYKEERRGPTLIAVQSSWELKRLASEIPVLEEFPLVPICVADKINYGVLDWQRHGARRMIRHYLNLDTCLSQAFEMSRYFHIPIGNLPEDISTFGSDLFFARHLQRHNHLLWLSPTARPDLGGKEADDNCLVMEFDDQATVEINSSGCYSTVCVELDLQNLAVNTILQSHHVNDMEGADSMGISFDVIQQASLEDMITGGQAASAPASYDETALCSNTFRILKSMVVGWVKEITQYHNIYADNQVMHFYRWLRSPSSLLHDPALHRTLHNMMKKLFLQLIAEFKRLGSSVIYANFNRIILCTKKRRVEDAIAYVEYITSSIHSKETFHSLTISFSRCWEFLLWMDPSNYGGIKGKVSSRIHCGLQDSQKAGGAEDEQENEDDEEERDGEEEEEAEESNVEDLLENNWNILQFLPQAASCQNYFLMIVSAYIVAVYHCMKDGLRRSAPGSTPVRRRGASQLSQEAEGAVGALPGMITFSQDYVANELTQSFFTITQKIQKKVTGSRNSTELSEMFPVLPGSHLLLNNPALEFIKYVCKVLSLDTNITNQVNKLNRDLLRLVDVGEFSEEAQFRDPCRSYVLPEVICRSCNFCRDLDLCKDSSFSEDGAVLPQWLCSNCQAPYDSSAIEMTLVEVLQKKLMAFTLQDLVCLKCRGVKETSMPVYCSCAGDFALTIHTQVFMEQIGIFRNIAQHYGMSYLLETLEWLLQKNPQLGH.

A disordered region spans residues 1 to 30 (MSLRSGGRRRADPGADGEASRDDGATSSVS). Positions 9–24 (RRADPGADGEASRDDG) are enriched in basic and acidic residues. Phosphoserine is present on residues Ser1184, Ser1297, Ser1317, and Ser1940. Residues 1939–1969 (DSQKAGGAEDEQENEDDEEERDGEEEEEAEE) form a disordered region. Residues 1946-1969 (AEDEQENEDDEEERDGEEEEEAEE) are compositionally biased toward acidic residues. Residues Cys2158, Cys2161, Cys2187, and Cys2190 each contribute to the Zn(2+) site. The CysA-type zinc-finger motif lies at 2158–2190 (CRSCNFCRDLDLCKDSSFSEDGAVLPQWLCSNC). [4Fe-4S] cluster contacts are provided by Cys2221, Cys2224, Cys2236, and Cys2238. The short motif at 2221–2238 (CLKCRGVKETSMPVYCSC) is the CysB motif element.

The protein belongs to the DNA polymerase type-B family. As to quaternary structure, component of the DNA polymerase epsilon complex consisting of four subunits: the catalytic subunit POLE and the accessory subunits POLE2, POLE3 and POLE4. Interacts with RAD17 and TOPBP1.

Its subcellular location is the nucleus. It catalyses the reaction DNA(n) + a 2'-deoxyribonucleoside 5'-triphosphate = DNA(n+1) + diphosphate. Functionally, catalytic component of the DNA polymerase epsilon complex. Participates in chromosomal DNA replication. Required during synthesis of the leading DNA strands at the replication fork, binds at/or near replication origins and moves along DNA with the replication fork. Has 3'-5' proofreading exonuclease activity that corrects errors arising during DNA replication. Involved in DNA synthesis during DNA repair. Along with DNA polymerase POLD1 and DNA polymerase POLK, has a role in excision repair (NER) synthesis following UV irradiation. The sequence is that of DNA polymerase epsilon catalytic subunit A from Homo sapiens (Human).